Here is an 861-residue protein sequence, read N- to C-terminus: Leucine--tRNA ligase (861 aa).

The short motif at 42–52 is the 'HIGH' region element; the sequence is PYPSGKLHMGH. Residues 620 to 624 carry the 'KMSKS' region motif; that stretch reads KMSKS. K623 lines the ATP pocket.

It belongs to the class-I aminoacyl-tRNA synthetase family.

The protein resides in the cytoplasm. It catalyses the reaction tRNA(Leu) + L-leucine + ATP = L-leucyl-tRNA(Leu) + AMP + diphosphate. In Hahella chejuensis (strain KCTC 2396), this protein is Leucine--tRNA ligase.